The primary structure comprises 301 residues: D-alanine--D-alanine ligase (301 aa).

In terms of domain architecture, ATP-grasp spans 99–293; it reads KRILAFGNVR…FEELLDTIIE (195 aa). 126 to 181 contributes to the ATP binding site; it reads IENLGYPVFIKPNNGGSSVATTLVESKEAVKDAVLEALKYDTEVMIEEYIKGDEIT. The Mg(2+) site is built by Asp-248, Glu-260, and Asn-262.

Belongs to the D-alanine--D-alanine ligase family. Mg(2+) is required as a cofactor. Mn(2+) serves as cofactor.

The protein resides in the cytoplasm. It carries out the reaction 2 D-alanine + ATP = D-alanyl-D-alanine + ADP + phosphate + H(+). The protein operates within cell wall biogenesis; peptidoglycan biosynthesis. Its function is as follows. Cell wall formation. This chain is D-alanine--D-alanine ligase, found in Clostridium perfringens (strain SM101 / Type A).